A 493-amino-acid chain; its full sequence is MTDQCVVSAPVRVRTRRLDVKETGALPAYRALAEHFGPDEVYLLESAAGPARDRRHQFVGFGALLSLSVTDRVVRVEGVPALRGLLLERAGALLEDGPQGLRLRTAGGLWPLLRAMRDMFDAEGSASGFRFGFLGFFGYDTARYIEDLPHLIENRPGLPDVRMVLHRGSVVTDLATGRCELLLHESPYWPGLAPETVTGLLADVEQAWPDPSADGFPASAVTDDSAPEVFANDVERCLKHIAVGDIYQVQIGHELSIRSTADPADVYQRLRGRNASPYMYLAGIDGHRLIGASPELFVRIEDGEVTMRPIAGTVPRSGADGGIAAGVRLRSDPKEIAEHTMLVDLCRNDIGRIARPNTLDVPDQLDVEGYSHVLHLVSTVVGRARVDTDAFDTIAALFPAGTMTGAPKIRAMEIIESVERSRRGLYAGALGLLDVGGYTNLALCIRTLFHHEGVYRTRASAGIVADSEPGAEWTETLAKMSATHWAVTGEELL.

It belongs to the anthranilate synthase component I family. The cofactor is Mg(2+).

The enzyme catalyses (2S)-2-amino-4-deoxychorismate + L-glutamate = chorismate + L-glutamine. In terms of biological role, converts chorismate to 2-amino-4-deoxychorismate (ADIC). Involved in the biosynthesis of the benzoxazolinate moiety of the enediyne antitumor antibiotic C-1027. The sequence is that of 2-amino-4-deoxychorismate synthase (sgcD) from Streptomyces globisporus.